Consider the following 265-residue polypeptide: Type II pantothenate kinase (265 aa).

6 to 13 (DAGGTLIK) contacts ATP. Glutamate 70 serves as the catalytic Proton acceptor. Residues threonine 99, 121-125 (GGMIQ), tyrosine 137, and serine 225 each bind ATP.

This sequence belongs to the type II pantothenate kinase family. As to quaternary structure, homodimer.

The protein localises to the cytoplasm. It carries out the reaction (R)-pantothenate + ATP = (R)-4'-phosphopantothenate + ADP + H(+). It participates in cofactor biosynthesis; coenzyme A biosynthesis; CoA from (R)-pantothenate: step 1/5. Catalyzes the phosphorylation of pantothenate (Pan), the first step in CoA biosynthesis. The sequence is that of Type II pantothenate kinase from Staphylococcus saprophyticus subsp. saprophyticus (strain ATCC 15305 / DSM 20229 / NCIMB 8711 / NCTC 7292 / S-41).